Reading from the N-terminus, the 312-residue chain is F-box protein At1g11270 (312 aa).

The region spanning 29–80 (SVVKLLLPHDVVGLILERLPVESLLRFKCVSNQWKSTIESQCFQERQLIRRM) is the F-box domain.

The chain is F-box protein At1g11270 from Arabidopsis thaliana (Mouse-ear cress).